The sequence spans 86 residues: Small ribosomal subunit protein uS17 (86 aa).

This sequence belongs to the universal ribosomal protein uS17 family. In terms of assembly, part of the 30S ribosomal subunit.

One of the primary rRNA binding proteins, it binds specifically to the 5'-end of 16S ribosomal RNA. The chain is Small ribosomal subunit protein uS17 from Streptococcus thermophilus (strain CNRZ 1066).